The following is a 227-amino-acid chain: Cytochrome c oxidase subunit 2 (227 aa).

N-formylmethionine is present on methionine 1. The Mitochondrial intermembrane portion of the chain corresponds to 1 to 14 (MAYPMQLGFQDATS). The chain crosses the membrane as a helical span at residues 15–45 (PIMEELLHFHDHTLMIVFLISSLVLYIISLM). Over 46–59 (LTTKLTHTSTMDAQ) the chain is Mitochondrial matrix. A helical membrane pass occupies residues 60-87 (EVETIWTILPAIILILIALPSLRILYMM). The Mitochondrial intermembrane portion of the chain corresponds to 88 to 227 (DEINNPSLTV…YFEKWSASML (140 aa)). Residues histidine 161, cysteine 196, glutamate 198, cysteine 200, histidine 204, and methionine 207 each coordinate Cu cation. A Mg(2+)-binding site is contributed by glutamate 198. Tyrosine 218 carries the phosphotyrosine modification.

It belongs to the cytochrome c oxidase subunit 2 family. As to quaternary structure, component of the cytochrome c oxidase (complex IV, CIV), a multisubunit enzyme composed of 14 subunits. The complex is composed of a catalytic core of 3 subunits MT-CO1, MT-CO2 and MT-CO3, encoded in the mitochondrial DNA, and 11 supernumerary subunits COX4I, COX5A, COX5B, COX6A, COX6B, COX6C, COX7A, COX7B, COX7C, COX8 and NDUFA4, which are encoded in the nuclear genome. The complex exists as a monomer or a dimer and forms supercomplexes (SCs) in the inner mitochondrial membrane with NADH-ubiquinone oxidoreductase (complex I, CI) and ubiquinol-cytochrome c oxidoreductase (cytochrome b-c1 complex, complex III, CIII), resulting in different assemblies (supercomplex SCI(1)III(2)IV(1) and megacomplex MCI(2)III(2)IV(2)). Found in a complex with TMEM177, COA6, COX18, COX20, SCO1 and SCO2. Interacts with TMEM177 in a COX20-dependent manner. Interacts with COX20. Interacts with COX16. Requires Cu cation as cofactor.

Its subcellular location is the mitochondrion inner membrane. The catalysed reaction is 4 Fe(II)-[cytochrome c] + O2 + 8 H(+)(in) = 4 Fe(III)-[cytochrome c] + 2 H2O + 4 H(+)(out). In terms of biological role, component of the cytochrome c oxidase, the last enzyme in the mitochondrial electron transport chain which drives oxidative phosphorylation. The respiratory chain contains 3 multisubunit complexes succinate dehydrogenase (complex II, CII), ubiquinol-cytochrome c oxidoreductase (cytochrome b-c1 complex, complex III, CIII) and cytochrome c oxidase (complex IV, CIV), that cooperate to transfer electrons derived from NADH and succinate to molecular oxygen, creating an electrochemical gradient over the inner membrane that drives transmembrane transport and the ATP synthase. Cytochrome c oxidase is the component of the respiratory chain that catalyzes the reduction of oxygen to water. Electrons originating from reduced cytochrome c in the intermembrane space (IMS) are transferred via the dinuclear copper A center (CU(A)) of subunit 2 and heme A of subunit 1 to the active site in subunit 1, a binuclear center (BNC) formed by heme A3 and copper B (CU(B)). The BNC reduces molecular oxygen to 2 water molecules using 4 electrons from cytochrome c in the IMS and 4 protons from the mitochondrial matrix. This chain is Cytochrome c oxidase subunit 2 (MT-CO2), found in Bos indicus (Zebu).